Consider the following 390-residue polypeptide: Protein snail (390 aa).

The SNAG domain stretch occupies residues 1-20 (MAANYKSCPLKKRPIVFVEE). Disordered stretches follow at residues 29–65 (ALTK…PKRD) and 162–191 (QSVY…DLSV). Polar residues-rich tracts occupy residues 32–43 (KDSQFAQDQPQD) and 162–172 (QSVYSYQQMTP). 5 consecutive C2H2-type zinc fingers follow at residues 245–267 (FKCD…RQFH), 280–302 (HSCE…IRTH), 306–328 (CKCP…IRTH), 334–356 (FQCP…QQTH), and 362–385 (YACQ…SSNC).

It belongs to the snail C2H2-type zinc-finger protein family.

The protein resides in the nucleus. Essential for the correct specification of ventral-dorsal patterns. This Drosophila melanogaster (Fruit fly) protein is Protein snail (sna).